The sequence spans 151 residues: uncharacterized protein (151 aa).

3 helical membrane-spanning segments follow: residues 12–32, 59–79, and 114–134; these read LAYF…LFII, LAFL…YGLL, and YFAY…IAFG.

The protein resides in the cell membrane. This is an uncharacterized protein from Bacillus subtilis (strain 168).